The primary structure comprises 1394 residues: DNA-directed RNA polymerase subunit beta' (1394 aa).

Residues cysteine 71, cysteine 73, cysteine 86, and cysteine 89 each contribute to the Zn(2+) site. Mg(2+) contacts are provided by aspartate 462, aspartate 464, and aspartate 466. 4 residues coordinate Zn(2+): cysteine 810, cysteine 883, cysteine 890, and cysteine 893.

This sequence belongs to the RNA polymerase beta' chain family. In terms of assembly, the RNAP catalytic core consists of 2 alpha, 1 beta, 1 beta' and 1 omega subunit. When a sigma factor is associated with the core the holoenzyme is formed, which can initiate transcription. Mg(2+) serves as cofactor. The cofactor is Zn(2+).

It carries out the reaction RNA(n) + a ribonucleoside 5'-triphosphate = RNA(n+1) + diphosphate. DNA-dependent RNA polymerase catalyzes the transcription of DNA into RNA using the four ribonucleoside triphosphates as substrates. This chain is DNA-directed RNA polymerase subunit beta', found in Beijerinckia indica subsp. indica (strain ATCC 9039 / DSM 1715 / NCIMB 8712).